The chain runs to 26 residues: Acyl carrier protein (26 aa).

Positions 2-26 (SDTATRVQKIVVEHLGVESDKVTQE) constitute a Carrier domain.

It belongs to the acyl carrier protein (ACP) family. Post-translationally, 4'-phosphopantetheine is transferred from CoA to a specific serine of apo-ACP by AcpS. This modification is essential for activity because fatty acids are bound in thioester linkage to the sulfhydryl of the prosthetic group.

It localises to the cytoplasm. Its pathway is lipid metabolism; fatty acid biosynthesis. Carrier of the growing fatty acid chain in fatty acid biosynthesis. The protein is Acyl carrier protein (acpP) of Erythrobacter longus.